The chain runs to 95 residues: Bacterial microcompartment shell protein EutM (95 aa).

Residues 6-90 (ALGMIETKGL…PHFEVDAILP (85 aa)) form the BMC domain.

It belongs to the bacterial microcompartments protein family. Homohexamer; has a positively charged pore 9 Angstroms in diameter. The hexamers pack into a two-dimensional array. May interact with EutQ.

Its subcellular location is the bacterial microcompartment. It participates in amine and polyamine degradation; ethanolamine degradation. Its function is as follows. A component of the bacterial microcompartment (BMC) shell dedicated to ethanolamine degradation. Each homohexamer has a central pore with an opening of up to 9.0 Angstroms. Expression of the eut operon may allow this bacteria to use ethanolamine as a carbon, nitrogen and energy source. The pore probably allows metabolite passage into and out of the BMC. The sequence is that of Bacterial microcompartment shell protein EutM from Clostridioides difficile (strain 630) (Peptoclostridium difficile).